The primary structure comprises 292 residues: Undecaprenyl-diphosphatase 2 (292 aa).

The next 5 membrane-spanning stretches (helical) occupy residues 89–109, 118–138, 203–223, 232–252, and 263–283; these read WLVI…QDAI, LIAT…WYAS, FLLA…SIGG, PTIL…AWFL, and FVLY…GGAL.

It belongs to the UppP family.

It is found in the cell membrane. The catalysed reaction is di-trans,octa-cis-undecaprenyl diphosphate + H2O = di-trans,octa-cis-undecaprenyl phosphate + phosphate + H(+). Catalyzes the dephosphorylation of undecaprenyl diphosphate (UPP). Confers resistance to bacitracin. This Frankia casuarinae (strain DSM 45818 / CECT 9043 / HFP020203 / CcI3) protein is Undecaprenyl-diphosphatase 2.